A 159-amino-acid polypeptide reads, in one-letter code: LOB domain-containing protein 25 (159 aa).

An LOB domain is found at 38–139 (SPCAACKFLR…RELEETNADL (102 aa)).

The protein belongs to the LOB domain-containing protein family. In terms of tissue distribution, expressed in young shoots, roots, stems, leaves and flowers.

The chain is LOB domain-containing protein 25 (LBD25) from Arabidopsis thaliana (Mouse-ear cress).